Reading from the N-terminus, the 1180-residue chain is uncharacterized protein (1180 aa).

7 disordered regions span residues 229-280 (RQQG…DTSI), 431-465 (KQPP…PPLK), 484-575 (SRDT…PNMR), 730-758 (GRPL…ASRT), 810-986 (GKAE…ASWD), 1045-1109 (RLQE…ELEM), and 1125-1152 (ERLE…QKEE). The segment covering 269–279 (QEDETQAEDTS) has biased composition (acidic residues). The segment covering 431–443 (KQPPKEKAHRRGA) has biased composition (basic residues). Polar residues predominate over residues 486–497 (DTLSPQGSSSLP). The segment covering 509 to 518 (SKARHTRVHS) has biased composition (basic residues). Composition is skewed to basic and acidic residues over residues 730–745 (GRPL…DPEP), 826–837 (SHERDLINEAKR), and 846–856 (TKGPKSEREGK). Positions 872–889 (KAKKKLEKKTRPQRKRTQ) are enriched in basic residues. A compositionally biased stretch (polar residues) spans 937 to 959 (QESQVSLDGRSSPSQIATVTGNM). Composition is skewed to basic and acidic residues over residues 960 to 986 (ESKE…ASWD), 1045 to 1106 (RLQE…RQEE), and 1127 to 1152 (LEYQ…QKEE). The stretch at 988 to 1171 (LRAERAEMRW…ATKQAQEQAR (184 aa)) forms a coiled coil.

This is an uncharacterized protein from Homo sapiens (Human).